We begin with the raw amino-acid sequence, 151 residues long: Single-stranded DNA-binding protein, mitochondrial (151 aa).

The transit peptide at 1–16 (MFRRPVLQVFRQFVRQ) directs the protein to the mitochondrion. The region spanning 30-141 (LNRVQLLGRV…IIADNIIFLS (112 aa)) is the SSB domain. A phosphoserine mark is found at Ser67 and Ser79. Lys113 bears the N6-acetyllysine mark. Lys122 carries the N6-succinyllysine modification.

As to quaternary structure, homotetramer. Interacts with MPG/AAG, through inhibition of its glycosylase activity it potentially prevents formation of DNA breaks in ssDNA, ensuring that base removal primarily occurs in dsDNA. Interacts with POLDIP2. Interacts with PRIMPOL.

It localises to the mitochondrion. The protein localises to the mitochondrion matrix. The protein resides in the mitochondrion nucleoid. Its function is as follows. Binds preferentially and cooperatively to pyrimidine rich single-stranded DNA (ss-DNA). In vitro, required to maintain the copy number of mitochondrial DNA (mtDNA) and plays a crucial role during mtDNA replication by stimulating the activity of the replisome components POLG and TWNK at the replication fork. Promotes the activity of the gamma complex polymerase POLG, largely by organizing the template DNA and eliminating secondary structures to favor ss-DNA conformations that facilitate POLG activity. In addition it is able to promote the 5'-3' unwinding activity of the mtDNA helicase TWNK. May also function in mtDNA repair. This chain is Single-stranded DNA-binding protein, mitochondrial (Ssbp1), found in Rattus norvegicus (Rat).